The sequence spans 853 residues: WEB family protein At5g16730, chloroplastic (853 aa).

Composition is skewed to low complexity over residues 1–27 and 36–49; these read MASK…PATP and KSET…STTT. The N-terminal 84 residues, 1–84, are a transit peptide targeting the chloroplast; it reads MASKTKTSLS…PTPPEKSQAR (84 aa). 4 disordered regions span residues 1 to 106, 386 to 465, 666 to 765, and 778 to 820; these read MASK…IKED, KEDL…SKKA, LAKK…SVEV, and KEAF…ALTA. Positions 92-101 are enriched in polar residues; that stretch reads ESPQTTTRLS. The stretch at 94-670 forms a coiled coil; the sequence is PQTTTRLSQI…LEEAILAKKQ (577 aa). 3 stretches are compositionally biased toward basic and acidic residues: residues 402 to 465, 698 to 718, and 732 to 753; these read EVSK…SKKA, NGHR…HEPP, and MEEK…KKDE. The span at 754–763 shows a compositional bias: acidic residues; it reads SQDDDKDDSV. Residues 778 to 788 are compositionally biased toward basic and acidic residues; the sequence is KEAFPDKKSEL. A Phosphoserine modification is found at serine 790. Over residues 797-807 the composition is skewed to basic and acidic residues; sequence SSKIDESDKTS.

This sequence belongs to the WEB family.

The protein localises to the plastid. The protein resides in the chloroplast. This Arabidopsis thaliana (Mouse-ear cress) protein is WEB family protein At5g16730, chloroplastic.